The primary structure comprises 427 residues: Serine protease HTRA2, mitochondrial (427 aa).

Residues 33–55 are disordered; that stretch reads HTASSSKGSGGDNSKDKENNGQN. Residues 66-86 traverse the membrane as a helical segment; the sequence is SAFQFCVPFSLGALVSAVLIE. Positions 78-81 match the IAP-binding motif; sequence ALVS. The interval 144-307 is serine protease; sequence SNGSGFVIEQ…IPIDYVKVFL (164 aa). Residues H162, D194, and S271 each act as charge relay system in the active site. The PDZ domain maps to 330 to 415; it reads MGITMLTLTP…DLEIVILRGV (86 aa).

It belongs to the peptidase S1C family. As to quaternary structure, interacts with th/DIAP1 (via BIR 2 domain).

It is found in the mitochondrion intermembrane space. It localises to the mitochondrion membrane. It catalyses the reaction Cleavage of non-polar aliphatic amino-acids at the P1 position, with a preference for Val, Ile and Met. At the P2 and P3 positions, Arg is selected most strongly with a secondary preference for other hydrophilic residues.. In terms of biological role, serine protease that shows proteolytic activity against a non-specific substrate beta-casein. Promotes or induces cell death either by direct binding to and inhibition of BIRC proteins (also called inhibitor of apoptosis proteins, IAPs), leading to an increase in caspase activity, or by a BIRC inhibition-independent, caspase-independent and serine protease activity-dependent mechanism. Can antagonize antiapoptotic activity of th/Diap1 by directly inducing the degradation of th/Diap1. The polypeptide is Serine protease HTRA2, mitochondrial (Drosophila pseudoobscura pseudoobscura (Fruit fly)).